The following is a 262-amino-acid chain: Phosphomannomutase 1 (262 aa).

An N-acetylalanine modification is found at A2. Residue D19 is the Nucleophile of the active site. Positions 19 and 21 each coordinate Mg(2+). D21 functions as the Proton donor/acceptor in the catalytic mechanism. Alpha-D-mannose 1-phosphate contacts are provided by R28, R132, R143, R150, M186, S188, and D190. Mg(2+) is bound by residues N218, F230, D232, and T235. Position 242 is a phosphoserine (S242).

This sequence belongs to the eukaryotic PMM family. As to quaternary structure, homodimer. The cofactor is Mg(2+). Strong expression in liver, heart, brain, and pancreas; lower expression in skeletal muscle.

It is found in the cytoplasm. It catalyses the reaction alpha-D-mannose 1-phosphate = D-mannose 6-phosphate. The protein operates within nucleotide-sugar biosynthesis; GDP-alpha-D-mannose biosynthesis; alpha-D-mannose 1-phosphate from D-fructose 6-phosphate: step 2/2. Its activity is regulated as follows. IMP, a metabolite whose concentration is elevated in anoxia, inhibits phosphomannomutase and phosphoglucomutase activities and strongly enhances glucose-1,6-bisphosphatase activity. Its function is as follows. Involved in the synthesis of the GDP-mannose and dolichol-phosphate-mannose required for a number of critical mannosyl transfer reactions. In addition, may be responsible for the degradation of glucose-1,6-bisphosphate in ischemic brain. The protein is Phosphomannomutase 1 (PMM1) of Homo sapiens (Human).